A 436-amino-acid polypeptide reads, in one-letter code: Glutamyl-tRNA reductase (436 aa).

Substrate-binding positions include 56 to 59 (TCNR), Ser114, 119 to 121 (EAQ), and Gln125. The active-site Nucleophile is Cys57. 194–199 (GAGEMI) is a binding site for NADP(+).

Belongs to the glutamyl-tRNA reductase family. As to quaternary structure, homodimer.

The enzyme catalyses (S)-4-amino-5-oxopentanoate + tRNA(Glu) + NADP(+) = L-glutamyl-tRNA(Glu) + NADPH + H(+). It functions in the pathway porphyrin-containing compound metabolism; protoporphyrin-IX biosynthesis; 5-aminolevulinate from L-glutamyl-tRNA(Glu): step 1/2. In terms of biological role, catalyzes the NADPH-dependent reduction of glutamyl-tRNA(Glu) to glutamate 1-semialdehyde (GSA). In Acidovorax sp. (strain JS42), this protein is Glutamyl-tRNA reductase.